We begin with the raw amino-acid sequence, 349 residues long: Holliday junction branch migration complex subunit RuvB (349 aa).

A large ATPase domain (RuvB-L) region spans residues 1–186 (MSEDYLDRDV…FGFTAHMDFY (186 aa)). ATP is bound by residues leucine 25, arginine 26, glycine 67, lysine 70, threonine 71, serine 72, 133–135 (EDF), arginine 176, tyrosine 186, and arginine 223. Threonine 71 lines the Mg(2+) pocket. The interval 187–257 (EPTELEGVLA…VAKAALAVYD (71 aa)) is small ATPAse domain (RuvB-S). The tract at residues 260–349 (ELGLDRLDRA…GLSQPGLFES (90 aa)) is head domain (RuvB-H). Arginine 315 and arginine 320 together coordinate DNA.

The protein belongs to the RuvB family. As to quaternary structure, homohexamer. Forms an RuvA(8)-RuvB(12)-Holliday junction (HJ) complex. HJ DNA is sandwiched between 2 RuvA tetramers; dsDNA enters through RuvA and exits via RuvB. An RuvB hexamer assembles on each DNA strand where it exits the tetramer. Each RuvB hexamer is contacted by two RuvA subunits (via domain III) on 2 adjacent RuvB subunits; this complex drives branch migration. In the full resolvosome a probable DNA-RuvA(4)-RuvB(12)-RuvC(2) complex forms which resolves the HJ.

The protein localises to the cytoplasm. The enzyme catalyses ATP + H2O = ADP + phosphate + H(+). Its function is as follows. The RuvA-RuvB-RuvC complex processes Holliday junction (HJ) DNA during genetic recombination and DNA repair, while the RuvA-RuvB complex plays an important role in the rescue of blocked DNA replication forks via replication fork reversal (RFR). RuvA specifically binds to HJ cruciform DNA, conferring on it an open structure. The RuvB hexamer acts as an ATP-dependent pump, pulling dsDNA into and through the RuvAB complex. RuvB forms 2 homohexamers on either side of HJ DNA bound by 1 or 2 RuvA tetramers; 4 subunits per hexamer contact DNA at a time. Coordinated motions by a converter formed by DNA-disengaged RuvB subunits stimulates ATP hydrolysis and nucleotide exchange. Immobilization of the converter enables RuvB to convert the ATP-contained energy into a lever motion, pulling 2 nucleotides of DNA out of the RuvA tetramer per ATP hydrolyzed, thus driving DNA branch migration. The RuvB motors rotate together with the DNA substrate, which together with the progressing nucleotide cycle form the mechanistic basis for DNA recombination by continuous HJ branch migration. Branch migration allows RuvC to scan DNA until it finds its consensus sequence, where it cleaves and resolves cruciform DNA. The sequence is that of Holliday junction branch migration complex subunit RuvB from Mycobacterium leprae (strain Br4923).